Reading from the N-terminus, the 352-residue chain is Rhodopsin (352 aa).

Residues 1–36 (MNGTEGPDFYIPFSNKTGVVRSPFEYPQYYLAEPWK) lie on the Extracellular side of the membrane. N-linked (GlcNAc...) asparagine glycosylation is found at Asn2 and Asn15. Residues 37–61 (YSALAAYMFMLIILGFPINFLTLYV) form a helical membrane-spanning segment. The Cytoplasmic segment spans residues 62–73 (TVQHKKLRSPLN). A helical membrane pass occupies residues 74-96 (YILLNLAVADLFMVLGGFTTTLY). Residues 97 to 110 (TSMNGYFVFGVTGC) are Extracellular-facing. Cys110 and Cys187 are oxidised to a cystine. A helical transmembrane segment spans residues 111 to 133 (YFEGFFATLGGEVALWCLVVLAI). Residues 134–136 (ERY) carry the 'Ionic lock' involved in activated form stabilization motif. Topologically, residues 134-152 (ERYIVVCKPMSNFRFGENH) are cytoplasmic. The chain crosses the membrane as a helical span at residues 153-173 (AIMGVVFTWIMALTCAAPPLV). At 174–202 (GWSRYIPEGMQCSCGVDYYTLKPEVNNES) the chain is on the extracellular side. A helical membrane pass occupies residues 203–224 (FVIYMFVVHFAIPLAVIFFCYG). The Cytoplasmic segment spans residues 225–252 (RLVCTVKEAAAQQQESATTQKAEKEVTR). The chain crosses the membrane as a helical span at residues 253 to 274 (MVIIMVVSFLICWVPYASVAFY). Topologically, residues 275–286 (IFSNQGSDFGPV) are extracellular. A helical membrane pass occupies residues 287–308 (FMTIPAFFAKSSAIYNPVIYIV). N6-(retinylidene)lysine is present on Lys296. Over 309–352 (MNKQFRNCMITTLCCGKNPLGDDETATGSKTETSSVSTSQVSPA) the chain is Cytoplasmic. 2 S-palmitoyl cysteine lipidation sites follow: Cys322 and Cys323. The segment at 332–352 (ETATGSKTETSSVSTSQVSPA) is disordered. The span at 335–352 (TGSKTETSSVSTSQVSPA) shows a compositional bias: low complexity.

This sequence belongs to the G-protein coupled receptor 1 family. Opsin subfamily. In terms of processing, contains one covalently linked retinal chromophore. Upon light absorption, the covalently bound 11-cis-retinal is converted to all-trans-retinal. After hydrolysis of the Schiff base and release of the covalently bound all-trans-retinal, active rhodopsin is regenerated by binding of a fresh molecule of 11-cis-retinal. Expressed in rod-shaped photoreceptor cells in the retina that mediate vision in dim ligh (at protein level).

It localises to the membrane. The protein resides in the cell projection. Its subcellular location is the cilium. It is found in the photoreceptor outer segment. Functionally, photoreceptor required for image-forming vision at low light intensity. Required for photoreceptor cell viability after birth. Light-induced isomerization of 11-cis to all-trans retinal triggers a conformational change that activates signaling via G-proteins. Subsequent receptor phosphorylation mediates displacement of the bound G-protein alpha subunit by arrestin and terminates signaling. In Alligator mississippiensis (American alligator), this protein is Rhodopsin (RHO).